The sequence spans 732 residues: Catalase-peroxidase (732 aa).

The segment covering 1-10 (MDAKTDDKAG) has biased composition (basic and acidic residues). The interval 1-26 (MDAKTDDKAGKCPVAHGPAPRGNRDW) is disordered. Residues 95-217 (WHSAGTYRTT…LGAVQMGLIY (123 aa)) constitute a cross-link (tryptophyl-tyrosyl-methioninium (Trp-Tyr) (with M-243)). H96 (proton acceptor) is an active-site residue. Positions 217–243 (YVNPEGPNGNPDPLGSAKDIRETFARM) form a cross-link, tryptophyl-tyrosyl-methioninium (Tyr-Met) (with W-95). H258 is a binding site for heme b.

The protein belongs to the peroxidase family. Peroxidase/catalase subfamily. In terms of assembly, homodimer or homotetramer. Heme b serves as cofactor. Post-translationally, formation of the three residue Trp-Tyr-Met cross-link is important for the catalase, but not the peroxidase activity of the enzyme.

The catalysed reaction is H2O2 + AH2 = A + 2 H2O. It catalyses the reaction 2 H2O2 = O2 + 2 H2O. Its function is as follows. Bifunctional enzyme with both catalase and broad-spectrum peroxidase activity. The chain is Catalase-peroxidase from Rhodopseudomonas palustris (strain BisB18).